We begin with the raw amino-acid sequence, 348 residues long: MKPIKVLIIDDSALIRSLLREMITSDPRLEVCGAAEDPYQAREMIKQLNPHVLTLDIEMPRMNGISFLKNLMRLHPLPVVMISTLTQVGAPETLEALSLGAVDFIGKPKQHSDLGLSQYRDEIIRKLICAAGANVTAMEGVGKAKATGLDAVAQSKSLKTGFLCAIGASTGGTEAIKAVVSSLPLNSPPIVVTQHIPPAFSTSFAKRLDGASAVKVYEAQHQQPIEKGCVYIAPGDAHLKVSKTAKGYICLLDSGEMVNRHRPSVEVLFDSVCEQVGNKAMGVILTGMGADGAEALKRMRDAGSHTIAQDEATSIVWGMPGAAVKLDAAAEVLPLNKVAANIIKHALK.

Residues 5–122 (KVLIIDDSAL…DLGLSQYRDE (118 aa)) form the Response regulatory domain. D56 carries the 4-aspartylphosphate modification. The CheB-type methylesterase domain occupies 157–348 (SLKTGFLCAI…AANIIKHALK (192 aa)). Active-site residues include S169, H195, and D291.

It belongs to the CheB family. In terms of processing, phosphorylated by CheA. Phosphorylation of the N-terminal regulatory domain activates the methylesterase activity.

Its subcellular location is the cytoplasm. It catalyses the reaction [protein]-L-glutamate 5-O-methyl ester + H2O = L-glutamyl-[protein] + methanol + H(+). It carries out the reaction L-glutaminyl-[protein] + H2O = L-glutamyl-[protein] + NH4(+). In terms of biological role, involved in chemotaxis. Part of a chemotaxis signal transduction system that modulates chemotaxis in response to various stimuli. Catalyzes the demethylation of specific methylglutamate residues introduced into the chemoreceptors (methyl-accepting chemotaxis proteins or MCP) by CheR. Also mediates the irreversible deamidation of specific glutamine residues to glutamic acid. The chain is Protein-glutamate methylesterase/protein-glutamine glutaminase 2 from Saccharophagus degradans (strain 2-40 / ATCC 43961 / DSM 17024).